The primary structure comprises 77 residues: Omega-conotoxin TxVII (77 aa).

The first 22 residues, 1–22 (MKLTCMMIVAVLFLTAWTFATA), serve as a signal peptide directing secretion. A propeptide spanning residues 23-49 (DDSGNGLENLFPKAHHEMKNPEASKLN) is cleaved from the precursor. 3 disulfide bridges follow: cysteine 52–cysteine 67, cysteine 59–cysteine 71, and cysteine 66–cysteine 75.

Expressed by the venom duct.

It is found in the secreted. In terms of biological role, omega-conotoxins act at presynaptic membranes, they bind and block voltage-gated calcium channels (Cav). Specifically acts on L-type channels. It blocks molluscan dihydropyridine-sensitive calcium channels. This chain is Omega-conotoxin TxVII, found in Conus textile (Cloth-of-gold cone).